A 226-amino-acid chain; its full sequence is Urease accessory protein UreF (226 aa).

It belongs to the UreF family. UreD, UreF and UreG form a complex that acts as a GTP-hydrolysis-dependent molecular chaperone, activating the urease apoprotein by helping to assemble the nickel containing metallocenter of UreC. The UreE protein probably delivers the nickel.

The protein resides in the cytoplasm. Its function is as follows. Required for maturation of urease via the functional incorporation of the urease nickel metallocenter. This chain is Urease accessory protein UreF, found in Paraburkholderia phymatum (strain DSM 17167 / CIP 108236 / LMG 21445 / STM815) (Burkholderia phymatum).